A 145-amino-acid polypeptide reads, in one-letter code: Alpha-amylase/trypsin inhibitor CM1 (145 aa).

The signal sequence occupies residues 1 to 25 (MASKSSISPLLLATVLVSVFAAATA).

It belongs to the protease inhibitor I6 (cereal trypsin/alpha-amylase inhibitor) family. Subunit of the tetrameric inhibitor. As to expression, endosperm.

It is found in the secreted. Alpha-amylase/trypsin inhibitor. It could be involved in insect defense mechanisms. The chain is Alpha-amylase/trypsin inhibitor CM1 from Triticum aestivum (Wheat).